A 248-amino-acid polypeptide reads, in one-letter code: 1-(5-phosphoribosyl)-5-[(5-phosphoribosylamino)methylideneamino] imidazole-4-carboxamide isomerase (248 aa).

Asp-8 serves as the catalytic Proton acceptor. The active-site Proton donor is the Asp-129.

It belongs to the HisA/HisF family.

It is found in the cytoplasm. It catalyses the reaction 1-(5-phospho-beta-D-ribosyl)-5-[(5-phospho-beta-D-ribosylamino)methylideneamino]imidazole-4-carboxamide = 5-[(5-phospho-1-deoxy-D-ribulos-1-ylimino)methylamino]-1-(5-phospho-beta-D-ribosyl)imidazole-4-carboxamide. Its pathway is amino-acid biosynthesis; L-histidine biosynthesis; L-histidine from 5-phospho-alpha-D-ribose 1-diphosphate: step 4/9. This is 1-(5-phosphoribosyl)-5-[(5-phosphoribosylamino)methylideneamino] imidazole-4-carboxamide isomerase from Rhizobium etli (strain CIAT 652).